We begin with the raw amino-acid sequence, 177 residues long: Large ribosomal subunit protein uL5 (177 aa).

This sequence belongs to the universal ribosomal protein uL5 family. As to quaternary structure, part of the 50S ribosomal subunit; part of the 5S rRNA/L5/L18/L25 subcomplex. Contacts the 5S rRNA and the P site tRNA. Forms a bridge to the 30S subunit in the 70S ribosome.

This is one of the proteins that bind and probably mediate the attachment of the 5S RNA into the large ribosomal subunit, where it forms part of the central protuberance. In the 70S ribosome it contacts protein S13 of the 30S subunit (bridge B1b), connecting the 2 subunits; this bridge is implicated in subunit movement. Contacts the P site tRNA; the 5S rRNA and some of its associated proteins might help stabilize positioning of ribosome-bound tRNAs. This Wolbachia sp. subsp. Brugia malayi (strain TRS) protein is Large ribosomal subunit protein uL5.